Here is a 559-residue protein sequence, read N- to C-terminus: MHEQYQAPLPVNSPALPEPFYYLHNFRAVLAWIGERYADLLDDQERAFIAAFAELPEASQALLVRMVMRKGTLFREGKLAYAEIGDTRAAVQPLLALGWVDAQPTLELAQLFGLLKKDELSQLFRDHLGRANLRKDALLERLQPLFPEARRLAEWQADFAEPVYELRCMALCDRLRLMYFGNLWQDWSEFVLADLGIYRYESVEFSADSRGFRLRADVDAYLHLFDCRQRFDLGEPLEELLAGLPGEPYANPWLEGRRVKLLFQFAQHCEKQRDFDLAQRLYRQSSHPGARLRAIRSLERGERFAEAHALAREASCAPESDAERQGLARLLPRLQGKLGLPRQARAAAPEIDRLDLCLAFPSEPCSVEWAVREHLEEPGCAVHYVENGLINSLFGLLCWEAIFAAIPGAFFHPFHSAPADLHSADFRQRRAALFEACLGRLEDGSYRDAIRCRYRDKFGLQSPFVYWELLGEELLEQALDCLPAAHLRAWFERLLEDIPGNRAGLPDLIQFWPAQRRYRMVEVKGPGDRLQDNQLRWLQFCREREMPVAVCYVRWHVDD.

Mn(2+) contacts are provided by glutamate 386, aspartate 507, glutamate 522, and valine 523. Positions 443–555 (DGSYRDAIRC…MPVAVCYVRW (113 aa)) constitute a VRR-NUC domain.

The protein belongs to the FAN1 family. The cofactor is Mn(2+). Mg(2+) is required as a cofactor.

The enzyme catalyses Hydrolytically removes 5'-nucleotides successively from the 3'-hydroxy termini of 3'-hydroxy-terminated oligonucleotides.. Its function is as follows. Nuclease required for the repair of DNA interstrand cross-links (ICL). Acts as a 5'-3' exonuclease that anchors at a cut end of DNA and cleaves DNA successively at every third nucleotide, allowing to excise an ICL from one strand through flanking incisions. Also has endonuclease activity toward 5'-flaps. This Pseudomonas aeruginosa (strain ATCC 15692 / DSM 22644 / CIP 104116 / JCM 14847 / LMG 12228 / 1C / PRS 101 / PAO1) protein is Fanconi-associated nuclease 1 homolog.